Here is a 220-residue protein sequence, read N- to C-terminus: UPF0711 protein C18orf21 (220 aa).

The disordered stretch occupies residues 117–181 (SRSFVSTLKS…VSTCSSKNTS (65 aa)). Polar residues predominate over residues 119-136 (SFVSTLKSNPATPTSKLS). Position 126 is a phosphoserine (serine 126). Phosphothreonine occurs at positions 130 and 139. A compositionally biased stretch (low complexity) spans 171–180 (SVSTCSSKNT).

Belongs to the UPF0711 family.

The sequence is that of UPF0711 protein C18orf21 (C18orf21) from Homo sapiens (Human).